We begin with the raw amino-acid sequence, 134 residues long: Global transcriptional regulator Spx (134 aa).

C10 and C13 form a disulfide bridge.

This sequence belongs to the ArsC family. Spx subfamily. In terms of assembly, interacts with the C-terminal domain of the alpha subunit of the RNAP.

The protein resides in the cytoplasm. In terms of biological role, global transcriptional regulator that plays a key role in stress response and exerts either positive or negative regulation of genes. Acts by interacting with the C-terminal domain of the alpha subunit of the RNA polymerase (RNAP). This interaction can enhance binding of RNAP to the promoter region of target genes and stimulate their transcription, or block interaction of RNAP with activator. This chain is Global transcriptional regulator Spx, found in Streptococcus pyogenes serotype M6 (strain ATCC BAA-946 / MGAS10394).